We begin with the raw amino-acid sequence, 218 residues long: Elongation factor Ts (218 aa).

Residues 82 to 85 (TDFV) form an involved in Mg(2+) ion dislocation from EF-Tu region.

This sequence belongs to the EF-Ts family.

It localises to the cytoplasm. Functionally, associates with the EF-Tu.GDP complex and induces the exchange of GDP to GTP. It remains bound to the aminoacyl-tRNA.EF-Tu.GTP complex up to the GTP hydrolysis stage on the ribosome. In Prochlorococcus marinus (strain MIT 9313), this protein is Elongation factor Ts.